A 1280-amino-acid chain; its full sequence is Dynactin subunit 1 (1280 aa).

Positions 1–26 are disordered; sequence MAQSKRHMYNRTPSGSRMSTEASARP. The segment covering 11 to 22 has biased composition (polar residues); it reads RTPSGSRMSTEA. Residues 48 to 90 enclose the CAP-Gly domain; that stretch reads GATLFATGKWVGVILDEAKGKNDGTVQGRKYFTCDEGHGIFVR. Positions 99 to 223 are disordered; sequence DGADTTSPET…SKEEEGLRDQ (125 aa). Positions 102-114 are enriched in polar residues; it reads DTTSPETPDSSAS. A phosphothreonine mark is found at Thr-108, Thr-145, Thr-146, and Thr-147. Residues 129-152 show a composition bias toward basic residues; that stretch reads SKLRGLKPKKAPTARKTTTRRPKP. The span at 161-205 shows a compositional bias: low complexity; sequence AGPSSSLGPSGSASAGELSSSEPSTPAQTPLAAPIIPTPALTSPG. At Ser-179 the chain carries Phosphoserine; by PLK1. At Ser-212 the chain carries Phosphoserine; by CDK1. Residues 214–223 show a composition bias toward basic and acidic residues; it reads SKEEEGLRDQ. Coiled-coil stretches lie at residues 214 to 513 and 942 to 1048; these read SKEE…ADYQ and LKLE…EGLR. Residues 910–1280 form an interaction with HPS6 region; the sequence is EYDAERPPSK…LHQLHGRLIS (371 aa). The disordered stretch occupies residues 1064-1089; sequence GEEQQRGGTPGQAPGALPGPGPVKDS. Residues 1184 to 1213 adopt a coiled-coil conformation; the sequence is SAQLMEQVAQLKSLSDTIEKLKDEVLKETV.

This sequence belongs to the dynactin 150 kDa subunit family. In terms of assembly, monomer and homodimer. Subunit of dynactin, a multiprotein complex part of a tripartite complex with dynein and a adapter, such as BICDL1, BICD2 or HOOK3. The dynactin complex is built around ACTR1A/ACTB filament and consists of an actin-related filament composed of a shoulder domain, a pointed end and a barbed end. Its length is defined by its flexible shoulder domain. The soulder is composed of 2 DCTN1 subunits, 4 DCTN2 and 2 DCTN3. DCTN1/p150(glued) binds directly to microtubules and to cytoplasmic dynein. The 4 DCNT2 (via N-terminus) bind the ACTR1A filament and act as molecular rulers to determine the length. The pointed end is important for binding dynein-dynactin cargo adapters. Consists of 4 subunits: ACTR10, DCNT4, DCTN5 and DCTN6. The barbed end is composed of a CAPZA1:CAPZB heterodimers, which binds ACTR1A/ACTB filament and dynactin and stabilizes dynactin. Interacts with the C-terminus of MAPRE1, MAPRE2 and MAPRE3. Interacts (via C-terminus) with SNX6. Interacts with CLN3, DYNAP, ECPAS and FBXL5. Interacts with MISP; this interaction regulates its distribution at the cell cortex. Interacts with CEP131. Interacts with CEP126. Interacts with CLIP1. Interacts with dynein intermediate chain and dynein heavy chain. Interacts with PLK1 (via POLO-box domain). Interacts with TBCB. Binds preferentially to tyrosinated microtubules than to detyrosinated microtubules. Interacts with PARD6A. Interacts with HPS6. Interacts with KIF3A. Interacts with BICD2. Interacts with DST (isoform 9). Interacts with DST (isoform 1). Identified in a complex with MREG and RILP. Interacts with BCCIP (isoform 2/alpha). Interacts with DCDC1. Interacts with AKNA. Interacts with DYNC1I2. Interacts with RUFY3 and RUFY4. Ubiquitinated by a SCF complex containing FBXL5, leading to its degradation by the proteasome. In terms of processing, phosphorylation by SLK at Thr-145, Thr-146 and Thr-147 targets DCTN1 to the centrosome. It is uncertain if SLK phosphorylates all three threonines or one or two of them. PLK1-mediated phosphorylation at Ser-179 is essential for its localization in the nuclear envelope and promotes its dissociation from microtubules during early mitosis and positively regulates nuclear envelope breakdown during prophase. In terms of tissue distribution, ubiquitous with a high level expression observed in the brain (at protein level).

The protein resides in the cytoplasm. It localises to the cytoskeleton. It is found in the microtubule organizing center. Its subcellular location is the centrosome. The protein localises to the centriole. The protein resides in the spindle. It localises to the nucleus envelope. It is found in the cell cortex. In terms of biological role, part of the dynactin complex that activates the molecular motor dynein for ultra-processive transport along microtubules. Plays a key role in dynein-mediated retrograde transport of vesicles and organelles along microtubules by recruiting and tethering dynein to microtubules. Binds to both dynein and microtubules providing a link between specific cargos, microtubules and dynein. Essential for targeting dynein to microtubule plus ends, recruiting dynein to membranous cargos and enhancing dynein processivity (the ability to move along a microtubule for a long distance without falling off the track). Can also act as a brake to slow the dynein motor during motility along the microtubule. Can regulate microtubule stability by promoting microtubule formation, nucleation and polymerization and by inhibiting microtubule catastrophe in neurons. Inhibits microtubule catastrophe by binding both to microtubules and to tubulin, leading to enhanced microtubule stability along the axon. Plays a role in metaphase spindle orientation. Plays a role in centriole cohesion and subdistal appendage organization and function. Its recruitment to the centriole in a KIF3A-dependent manner is essential for the maintenance of centriole cohesion and the formation of subdistal appendage. Also required for microtubule anchoring at the mother centriole. Plays a role in primary cilia formation. The polypeptide is Dynactin subunit 1 (Dctn1) (Rattus norvegicus (Rat)).